The sequence spans 88 residues: MSEERNTRKVYRGRVVSDKMDKTITVAVETYKNHPVYGKRVNYAKKFKAHDENNDAKLNDVVEIMETRPLSATKRFRLVRVVEKAVVL.

Belongs to the universal ribosomal protein uS17 family. In terms of assembly, part of the 30S ribosomal subunit.

In terms of biological role, one of the primary rRNA binding proteins, it binds specifically to the 5'-end of 16S ribosomal RNA. This Oenococcus oeni (strain ATCC BAA-331 / PSU-1) protein is Small ribosomal subunit protein uS17.